The primary structure comprises 583 residues: CTP synthase (583 aa).

Residues 1–278 form an amidoligase domain region; it reads MRRHPQTATK…DAFVVRRLNL (278 aa). Ser20 provides a ligand contact to CTP. Ser20 is a UTP binding site. ATP is bound by residues 21–26 and Asp78; that span reads SLGKGL. Residues Asp78 and Glu152 each contribute to the Mg(2+) site. Residues 159–161, 199–204, and Lys235 contribute to the CTP site; these read DIE and KTKPTQ. UTP-binding positions include 199 to 204 and Lys235; that span reads KTKPTQ. The region spanning 303 to 551 is the Glutamine amidotransferase type-1 domain; the sequence is RIALVGKYVE…VKAAIDYKEG (249 aa). L-glutamine is bound at residue Gly366. Cys393 functions as the Nucleophile; for glutamine hydrolysis in the catalytic mechanism. L-glutamine-binding positions include 394–397, Glu416, and Arg477; that span reads LGLQ. Active-site residues include His524 and Glu526. The tract at residues 559–583 is disordered; the sequence is PERVSNGAERRDQVGQSIPEPANRG.

This sequence belongs to the CTP synthase family. Homotetramer.

The enzyme catalyses UTP + L-glutamine + ATP + H2O = CTP + L-glutamate + ADP + phosphate + 2 H(+). It catalyses the reaction L-glutamine + H2O = L-glutamate + NH4(+). It carries out the reaction UTP + NH4(+) + ATP = CTP + ADP + phosphate + 2 H(+). The protein operates within pyrimidine metabolism; CTP biosynthesis via de novo pathway; CTP from UDP: step 2/2. Allosterically activated by GTP, when glutamine is the substrate; GTP has no effect on the reaction when ammonia is the substrate. The allosteric effector GTP functions by stabilizing the protein conformation that binds the tetrahedral intermediate(s) formed during glutamine hydrolysis. Inhibited by the product CTP, via allosteric rather than competitive inhibition. Functionally, catalyzes the ATP-dependent amination of UTP to CTP with either L-glutamine or ammonia as the source of nitrogen. Regulates intracellular CTP levels through interactions with the four ribonucleotide triphosphates. This Mycobacterium marinum (strain ATCC BAA-535 / M) protein is CTP synthase.